The primary structure comprises 214 residues: Ribosomal RNA small subunit methyltransferase G (214 aa).

S-adenosyl-L-methionine-binding positions include G81, M86, 132–133 (AE), and R147.

It belongs to the methyltransferase superfamily. RNA methyltransferase RsmG family.

It is found in the cytoplasm. It catalyses the reaction guanosine(527) in 16S rRNA + S-adenosyl-L-methionine = N(7)-methylguanosine(527) in 16S rRNA + S-adenosyl-L-homocysteine. Specifically methylates the N7 position of guanine in position 527 of 16S rRNA. The chain is Ribosomal RNA small subunit methyltransferase G from Pseudomonas syringae pv. syringae (strain B728a).